A 90-amino-acid polypeptide reads, in one-letter code: MLQYHMIADGRVQGVGFRYFVQMEADRHKVAGWVKNRDDGRVEILAEGPEESLKQFAEAVRKGSPFSNVTGVTIEESHRLKGYRTFSISY.

One can recognise an Acylphosphatase-like domain in the interval 3–90 (QYHMIADGRV…KGYRTFSISY (88 aa)). Residues Arg18 and Asn36 contribute to the active site.

Belongs to the acylphosphatase family.

It catalyses the reaction an acyl phosphate + H2O = a carboxylate + phosphate + H(+). This is Acylphosphatase (acyP) from Bacillus velezensis (strain DSM 23117 / BGSC 10A6 / LMG 26770 / FZB42) (Bacillus amyloliquefaciens subsp. plantarum).